The sequence spans 111 residues: Entry-fusion complex protein OPG086 (111 aa).

A helical; Signal-anchor transmembrane segment spans residues 1–21; the sequence is MASLLYFILFLLFVCISYYFT. The Virion surface portion of the chain corresponds to 22-111; sequence YYPTNKLQAA…TLLPILLLSK (90 aa).

The protein belongs to the orthopoxvirus OPG086 family. In terms of assembly, interacts with OPG099/L5. Component of the entry fusion complex (EFC) composed of OPG053, OPG076, OPG086, OPG094, OPG095, OPG099, OPG107, OPG143, OPG104, OPG147 and OPG155. Except for OPG095 and OPG053, each of the EFC proteins is required for assembly or stability of the complex. In terms of processing, unglycosylated because produced in viral factories instead of the classic ER -Golgi route.

The protein resides in the virion membrane. Its function is as follows. Component of the entry fusion complex (EFC), which consists of 11 proteins. During cell infection, this complex mediates entry of the virion core into the host cytoplasm by a two-step mechanism consisting of lipid mixing of the viral and cellular membranes and subsequent pore formation. The sequence is that of Entry-fusion complex protein OPG086 (OPG086) from Variola virus (isolate Human/India/Ind3/1967) (VARV).